A 379-amino-acid chain; its full sequence is Dual-specificity RNA methyltransferase RlmN (379 aa).

Glutamate 95 serves as the catalytic Proton acceptor. In terms of domain architecture, Radical SAM core spans 101–345 (EETRGTLCVS…TTVRKTRGDD (245 aa)). Cysteines 108 and 350 form a disulfide. Positions 115, 119, and 122 each coordinate [4Fe-4S] cluster. S-adenosyl-L-methionine is bound by residues 176–177 (GE), serine 208, 230–232 (SLH), and asparagine 307. Residue cysteine 350 is the S-methylcysteine intermediate of the active site.

It belongs to the radical SAM superfamily. RlmN family. It depends on [4Fe-4S] cluster as a cofactor.

It is found in the cytoplasm. The catalysed reaction is adenosine(2503) in 23S rRNA + 2 reduced [2Fe-2S]-[ferredoxin] + 2 S-adenosyl-L-methionine = 2-methyladenosine(2503) in 23S rRNA + 5'-deoxyadenosine + L-methionine + 2 oxidized [2Fe-2S]-[ferredoxin] + S-adenosyl-L-homocysteine. It catalyses the reaction adenosine(37) in tRNA + 2 reduced [2Fe-2S]-[ferredoxin] + 2 S-adenosyl-L-methionine = 2-methyladenosine(37) in tRNA + 5'-deoxyadenosine + L-methionine + 2 oxidized [2Fe-2S]-[ferredoxin] + S-adenosyl-L-homocysteine. In terms of biological role, specifically methylates position 2 of adenine 2503 in 23S rRNA and position 2 of adenine 37 in tRNAs. m2A2503 modification seems to play a crucial role in the proofreading step occurring at the peptidyl transferase center and thus would serve to optimize ribosomal fidelity. The sequence is that of Dual-specificity RNA methyltransferase RlmN from Burkholderia ambifaria (strain MC40-6).